Consider the following 80-residue polypeptide: Defensin-like protein 1 (80 aa).

The signal sequence occupies residues 1-29 (MAKFASIIALLFAALVLFAAFEAPTMVEA). Residue Gln-30 is modified to Pyrrolidone carboxylic acid. Disulfide bonds link Cys-33-Cys-80, Cys-44-Cys-65, Cys-50-Cys-74, and Cys-54-Cys-76.

It belongs to the DEFL family. As to quaternary structure, forms oligomers in its native state.

Its subcellular location is the secreted. In terms of biological role, possesses antifungal activity sensitive to inorganic cations. The chain is Defensin-like protein 1 (AFP1) from Raphanus sativus (Radish).